A 312-amino-acid chain; its full sequence is Porphobilinogen deaminase (312 aa).

Cys241 is subject to S-(dipyrrolylmethanemethyl)cysteine.

It belongs to the HMBS family. In terms of assembly, monomer. It depends on dipyrromethane as a cofactor.

It catalyses the reaction 4 porphobilinogen + H2O = hydroxymethylbilane + 4 NH4(+). The protein operates within porphyrin-containing compound metabolism; protoporphyrin-IX biosynthesis; coproporphyrinogen-III from 5-aminolevulinate: step 2/4. It functions in the pathway porphyrin-containing compound metabolism; chlorophyll biosynthesis. Tetrapolymerization of the monopyrrole PBG into the hydroxymethylbilane pre-uroporphyrinogen in several discrete steps. This chain is Porphobilinogen deaminase, found in Chlorobaculum tepidum (strain ATCC 49652 / DSM 12025 / NBRC 103806 / TLS) (Chlorobium tepidum).